The sequence spans 556 residues: MGQDTDMLNTYQQLVRTPSVRPGQDVRLQAPGTRTGLLKLLSTVSQDKQGCLGSGDGVPNQDLQQRSQSSRQTAKKDRKPRGQSKKGQGSEESEDHFPLLPRKPSFPFQWAWESIATDVRAVLQPSSPTPGHQALPMPSSFSQRQSRRKSTANLPEAHGCCWKTEAQNLKARQQLGAWGGVSIPTGKGELGSEPPSGLQLPGRRPGSGSASDKQVQLQSLGAEEAERGLSSGVLPQRPRRGSISEEEQFSEATEEAEEGEHRTPCRRRAGCQRKGQISGEEASDEGEVQGQSQGSSPSFNNLRRRQWRKTRAKELQGPWDLEKLHRQLQRDLDCGPQKLPWKTLRAAFQASKRNGKAYASGYDETFVSANLPNRTFHKRQEATRSLLQAWERQRQEERQQAELRRARTQHVQRQVAHCLAAYAPRGSRGPGAAQRKLEELRRQERQRFAEYQAELQGIQHRVQARPFLFQQAMQANARLTVTRRFSQVLSALGLDEEQLLSEAGKVDREGTPRKPRSHRSMGVRMEHSPQRPPRTEPTGSQPDRHYNPSLDPECSP.

Polar residues predominate over residues 1 to 16 (MGQDTDMLNTYQQLVR). Disordered stretches follow at residues 1–31 (MGQD…LQAP), 50–102 (GCLG…LLPR), 123–155 (LQPS…ANLP), and 179–309 (GGVS…QWRK). Residues 208–219 (GSASDKQVQLQS) show a composition bias toward polar residues. Positions 244–258 (SEEEQFSEATEEAEE) are enriched in acidic residues. The span at 289–301 (QGQSQGSSPSFNN) shows a compositional bias: polar residues. The stretch at 379 to 464 (RQEATRSLLQ…LQGIQHRVQA (86 aa)) forms a coiled coil. The segment at 503-556 (AGKVDREGTPRKPRSHRSMGVRMEHSPQRPPRTEPTGSQPDRHYNPSLDPECSP) is disordered.

The sequence is that of Testis-specific protein 10-interacting protein (TSGA10IP) from Homo sapiens (Human).